The primary structure comprises 250 residues: MKITPVKALTDNYIWMIQHGNHAVCVDPSEPSPVLEFLVRNRLMLAQTWVTHPHPDHEGGAAALWRGYMESPVYGESDIEAATHTVTAGTRFTFGNGQVTVWATPGHTDRHTSYLLETSDGIHVFCGDTLFSAGCGRVFTGTVEQLYDSFQRFNQLPEGTLFYPAHEYTAANLRFAAHIEPDNADIQTALKAAERTPTLPVTLAHERRVNPFLRTEIPAVRQRAEALVGKTLNSGLEVFAALRELKNAYR.

Zn(2+)-binding residues include His52, His54, Asp56, His57, His107, Asp128, and His166.

The protein belongs to the metallo-beta-lactamase superfamily. Glyoxalase II family. In terms of assembly, monomer. Zn(2+) serves as cofactor.

The enzyme catalyses an S-(2-hydroxyacyl)glutathione + H2O = a 2-hydroxy carboxylate + glutathione + H(+). The protein operates within secondary metabolite metabolism; methylglyoxal degradation; (R)-lactate from methylglyoxal: step 2/2. Functionally, thiolesterase that catalyzes the hydrolysis of S-D-lactoyl-glutathione to form glutathione and D-lactic acid. The polypeptide is Hydroxyacylglutathione hydrolase (Neisseria gonorrhoeae (strain NCCP11945)).